We begin with the raw amino-acid sequence, 590 residues long: Phosphate-repressible phosphate permease pho-4 (590 aa).

The next 8 helical transmembrane spans lie at 6-26 (FDYL…NIGA), 44-64 (YLQA…GVGA), 85-105 (ALLM…LTMA), 118-138 (IMGG…VQWV), 149-169 (VFLA…IIFL), 186-206 (FVMV…LLLW), 220-240 (IAGT…IFLM), and 246-266 (IVIL…PLLL). Over 267-466 (RRGEVPPPPA…GALPEKGKAD (200 aa)) the chain is Cytoplasmic. The segment at 297 to 361 (ARRAAQNGDS…PQIKTMVGPR (65 aa)) is disordered. Polar residues predominate over residues 313–322 (VTSSTSNPSA). The span at 325–345 (DGEKGATITKDDSSYSHDHSE) shows a compositional bias: basic and acidic residues. The next 4 helical transmembrane spans lie at 467–487 (VPVW…WTYG), 506–525 (GFSM…RLKL), 527–547 (VSTT…SGTW), and 561–581 (GWFI…GIII).

This sequence belongs to the inorganic phosphate transporter (PiT) (TC 2.A.20) family.

The protein localises to the cell membrane. With respect to regulation, phosphate transport activity is competitively inhibited by vanadate and arsenate. Functionally, high-affinity transporter for external inorganic phosphate. Acts probably as a sodium-phosphate symporter. Component of the high affinity phosphate transport system II (ptsII) necessary for scavenging phosphorus from the environment under conditions of limiting phosphorus. The polypeptide is Phosphate-repressible phosphate permease pho-4 (Neurospora crassa (strain ATCC 24698 / 74-OR23-1A / CBS 708.71 / DSM 1257 / FGSC 987)).